The sequence spans 253 residues: 3-deoxy-manno-octulosonate cytidylyltransferase (253 aa).

It belongs to the KdsB family.

It localises to the cytoplasm. It carries out the reaction 3-deoxy-alpha-D-manno-oct-2-ulosonate + CTP = CMP-3-deoxy-beta-D-manno-octulosonate + diphosphate. Its pathway is nucleotide-sugar biosynthesis; CMP-3-deoxy-D-manno-octulosonate biosynthesis; CMP-3-deoxy-D-manno-octulosonate from 3-deoxy-D-manno-octulosonate and CTP: step 1/1. It participates in bacterial outer membrane biogenesis; lipopolysaccharide biosynthesis. In terms of biological role, activates KDO (a required 8-carbon sugar) for incorporation into bacterial lipopolysaccharide in Gram-negative bacteria. In Acidithiobacillus ferrooxidans (strain ATCC 23270 / DSM 14882 / CIP 104768 / NCIMB 8455) (Ferrobacillus ferrooxidans (strain ATCC 23270)), this protein is 3-deoxy-manno-octulosonate cytidylyltransferase.